Reading from the N-terminus, the 87-residue chain is Large ribosomal subunit protein bL31B (87 aa).

Belongs to the bacterial ribosomal protein bL31 family. Type B subfamily. In terms of assembly, part of the 50S ribosomal subunit.

This Burkholderia pseudomallei (strain 1106a) protein is Large ribosomal subunit protein bL31B.